Here is a 902-residue protein sequence, read N- to C-terminus: Proline-rich transmembrane protein 4 (902 aa).

The first 18 residues, 1 to 18 (MAGRGCLELGLFCWVLLA), serve as a signal peptide directing secretion. Disordered regions lie at residues 120 to 149 (FTPW…SQPR) and 262 to 337 (PPPL…SGQP). A compositionally biased stretch (low complexity) spans 125–139 (SSLPPESTSPLSGPT). Polar residues predominate over residues 271–301 (SSPSPLDSVASPSSASIKTTPVQHDPTVSTS). The next 5 membrane-spanning stretches (helical) occupy residues 371 to 391 (AGAL…LLPW), 393 to 413 (CPPG…AGTT), 431 to 451 (ALAW…GLGL), 465 to 485 (PIGL…AALG), and 501 to 521 (GLHA…SCWG). Ser642 carries the post-translational modification Phosphoserine. Disordered regions lie at residues 700 to 721 (GARA…TVDF), 771 to 811 (KTGA…SLCG), and 836 to 872 (VLSP…ASEL). A compositionally biased stretch (polar residues) spans 703 to 717 (ANTTQSPASSPSSDC). Residues 786–798 (SPAPPELPSPGAW) are compositionally biased toward pro residues. Low complexity-rich tracts occupy residues 799 to 811 (PPGS…SLCG) and 843 to 854 (SESSPSLPASGS).

It localises to the membrane. The polypeptide is Proline-rich transmembrane protein 4 (Prrt4) (Rattus norvegicus (Rat)).